The sequence spans 113 residues: Carrot ABA-induced in somatic embryos 3 (113 aa).

Composition is skewed to basic and acidic residues over residues 1-17 (MASGQEKRSELDARAKQ), 32-52 (EAQEHLAEGRSKGGHTRKEQL), and 65-77 (GETRREQMGKEGY). Residues 1-113 (MASGQEKRSE…IDQSKFRTKS (113 aa)) are disordered.

Belongs to the small hydrophilic plant seed protein family. In terms of tissue distribution, expressed in embryogenic cells, somatic embryos and seeds at the later stages of development. Not detected in leaves.

In Daucus carota (Wild carrot), this protein is Carrot ABA-induced in somatic embryos 3.